The following is a 405-amino-acid chain: Cystathionine gamma-lyase (405 aa).

Substrate is bound by residues R62, Y114, and R119. An N6-(pyridoxal phosphate)lysine modification is found at K212. Residue E339 coordinates substrate.

The protein belongs to the trans-sulfuration enzymes family. As to quaternary structure, homotetramer. Interacts with CALM in a calcium-dependent manner. It depends on pyridoxal 5'-phosphate as a cofactor.

Its subcellular location is the cytoplasm. The enzyme catalyses L,L-cystathionine + H2O = 2-oxobutanoate + L-cysteine + NH4(+). It catalyses the reaction L-cysteine + H2O = hydrogen sulfide + pyruvate + NH4(+) + H(+). It carries out the reaction L-homocysteine + H2O = 2-oxobutanoate + hydrogen sulfide + NH4(+) + H(+). The catalysed reaction is L-homoserine = 2-oxobutanoate + NH4(+). The enzyme catalyses L-selenocystathionine + H2O = L-selenocysteine + 2-oxobutanoate + NH4(+). The protein operates within amino-acid biosynthesis; L-cysteine biosynthesis; L-cysteine from L-homocysteine and L-serine: step 2/2. Catalyzes the last step in the trans-sulfuration pathway from L-methionine to L-cysteine in a pyridoxal-5'-phosphate (PLP)-dependent manner, which consists on cleaving the L,L-cystathionine molecule into L-cysteine, ammonia and 2-oxobutanoate. Part of the L-cysteine derived from the trans-sulfuration pathway is utilized for biosynthesis of the ubiquitous antioxidant glutathione. Besides its role in the conversion of L-cystathionine into L-cysteine, it utilizes L-cysteine and L-homocysteine as substrates (at much lower rates than L,L-cystathionine) to produce hydrogen sulfide (H2S). In vitro, it converts two L-cysteine molecules into lanthionine and H2S, and two L-homocysteine molecules to homolanthionine and H2S, which can be particularly relevant under conditions of severe hyperhomocysteinemia. Lanthionine and homolanthionine are structural homologs of L,L-cystathionine that differ by the absence or presence of an extra methylene group, respectively. Acts as a cysteine-protein sulfhydrase by mediating sulfhydration of target proteins: sulfhydration consists of converting -SH groups into -SSH on specific cysteine residues of target proteins such as GAPDH, PTPN1 and NF-kappa-B subunit RELA, thereby regulating their function. By generating the gasotransmitter H2S, it participates in a number of physiological processes such as vasodilation, bone protection, and inflammation. Plays an essential role in myogenesis by contributing to the biogenesis of H2S in skeletal muscle tissue. Can also accept homoserine as substrate. Catalyzes the elimination of selenocystathionine (which can be derived from the diet) to yield selenocysteine, ammonia and 2-oxobutanoate. In Macaca fascicularis (Crab-eating macaque), this protein is Cystathionine gamma-lyase (CTH).